The primary structure comprises 130 residues: ATP synthase epsilon chain (130 aa).

Belongs to the ATPase epsilon chain family. As to quaternary structure, F-type ATPases have 2 components, CF(1) - the catalytic core - and CF(0) - the membrane proton channel. CF(1) has five subunits: alpha(3), beta(3), gamma(1), delta(1), epsilon(1). CF(0) has three main subunits: a, b and c.

The protein resides in the cell inner membrane. Produces ATP from ADP in the presence of a proton gradient across the membrane. This is ATP synthase epsilon chain (atpC) from Fuscovulum blasticum (Rhodobacter blasticus).